The primary structure comprises 461 residues: L-serine dehydratase (461 aa).

It belongs to the iron-sulfur dependent L-serine dehydratase family. [4Fe-4S] cluster serves as cofactor.

The catalysed reaction is L-serine = pyruvate + NH4(+). Its pathway is carbohydrate biosynthesis; gluconeogenesis. In Mycobacterium bovis (strain ATCC BAA-935 / AF2122/97), this protein is L-serine dehydratase (sdaA).